The primary structure comprises 118 residues: Large ribosomal subunit protein bL21c (118 aa).

This sequence belongs to the bacterial ribosomal protein bL21 family. As to quaternary structure, part of the 50S ribosomal subunit.

The protein resides in the plastid. It is found in the chloroplast. Functionally, this protein binds to 23S rRNA. In Zygnema circumcarinatum (Green alga), this protein is Large ribosomal subunit protein bL21c.